The chain runs to 1402 residues: DNA-directed RNA polymerase subunit beta' (1402 aa).

C70, C72, C85, and C88 together coordinate Zn(2+). Positions 460, 462, and 464 each coordinate Mg(2+). C812, C886, C893, and C896 together coordinate Zn(2+). Residues 1373–1402 (DRFLNGSASSNEKSRSAGVLEATDEESAGD) form a disordered region.

Belongs to the RNA polymerase beta' chain family. In terms of assembly, the RNAP catalytic core consists of 2 alpha, 1 beta, 1 beta' and 1 omega subunit. When a sigma factor is associated with the core the holoenzyme is formed, which can initiate transcription. Requires Mg(2+) as cofactor. The cofactor is Zn(2+).

The catalysed reaction is RNA(n) + a ribonucleoside 5'-triphosphate = RNA(n+1) + diphosphate. DNA-dependent RNA polymerase catalyzes the transcription of DNA into RNA using the four ribonucleoside triphosphates as substrates. This Dichelobacter nodosus (strain VCS1703A) protein is DNA-directed RNA polymerase subunit beta'.